The primary structure comprises 264 residues: Acetylglutamate kinase (264 aa).

Substrate-binding positions include 40-41 (GG), arginine 62, and asparagine 158.

This sequence belongs to the acetylglutamate kinase family. ArgB subfamily.

It localises to the cytoplasm. It carries out the reaction N-acetyl-L-glutamate + ATP = N-acetyl-L-glutamyl 5-phosphate + ADP. Its pathway is amino-acid biosynthesis; L-arginine biosynthesis; N(2)-acetyl-L-ornithine from L-glutamate: step 2/4. Catalyzes the ATP-dependent phosphorylation of N-acetyl-L-glutamate. The chain is Acetylglutamate kinase from Cytophaga hutchinsonii (strain ATCC 33406 / DSM 1761 / CIP 103989 / NBRC 15051 / NCIMB 9469 / D465).